The primary structure comprises 238 residues: Orotidine 5'-phosphate decarboxylase (238 aa).

Substrate-binding positions include D10, K32, 59 to 68 (DLKLHDIPNT), T122, R184, Q193, G213, and R214. The active-site Proton donor is K61.

It belongs to the OMP decarboxylase family. Type 1 subfamily. Homodimer.

It carries out the reaction orotidine 5'-phosphate + H(+) = UMP + CO2. Its pathway is pyrimidine metabolism; UMP biosynthesis via de novo pathway; UMP from orotate: step 2/2. Catalyzes the decarboxylation of orotidine 5'-monophosphate (OMP) to uridine 5'-monophosphate (UMP). This chain is Orotidine 5'-phosphate decarboxylase, found in Bacillus cereus (strain B4264).